The sequence spans 271 residues: Transmembrane protein 150A (271 aa).

Residues 1–2 (MT) lie on the Cytoplasmic side of the membrane. The helical transmembrane segment at 3–23 (AWILLPVSLSAFSITGIWTVY) threads the bilayer. The Extracellular portion of the chain corresponds to 24 to 75 (AMAVMNHHVCPVENWSYNESCPPDPAEQGGPKTCCTLDDVPLISKCGSYPPE). Residues asparagine 37 and asparagine 41 are each glycosylated (N-linked (GlcNAc...) asparagine). A helical membrane pass occupies residues 76–96 (SCLFSLIGNMGAFMVALICLL). The Cytoplasmic portion of the chain corresponds to 97-108 (RYGQLLEQSRHS). A helical membrane pass occupies residues 109-129 (WVNTTALITGCTNAAGLLVVG). The Extracellular segment spans residues 130–140 (NFQVDHARSLH). Residues 141 to 161 (YVGAGVAFPAGLLFVCLHCAL) traverse the membrane as a helical segment. Residues 162–178 (SYQGATAPLDLAVAYLR) lie on the Cytoplasmic side of the membrane. A helical transmembrane segment spans residues 179-199 (SVLAVIAFITLVLSGVFFVHE). At 200–211 (SSQLQHGAALCE) the chain is on the extracellular side. A helical transmembrane segment spans residues 212 to 232 (WVCVIDILIFYGTFSYEFGAV). Residues 233-271 (SSDTLVAALQPTPGRACKSSGSSSTSTHLNCAPESIAMI) lie on the Cytoplasmic side of the membrane.

This sequence belongs to the DRAM/TMEM150 family. In terms of assembly, interacts (via C-terminal cytoplasmic tail) with PI4KA.

Its subcellular location is the cell membrane. Its function is as follows. Regulates localization of phosphatidylinositol 4-kinase (PI4K) to the plasma membrane, possibly by reducing the association of TTC7 (TTC7A or TTC7B) with the PI4K complex. Acts as a regulator of phosphatidylinositol 4-phosphate (PtdIns(4)P) synthesis. May also play a role in fasting-induced catabolism. The protein is Transmembrane protein 150A (TMEM150A) of Homo sapiens (Human).